Reading from the N-terminus, the 207-residue chain is Large ribosomal subunit protein uL4 (207 aa).

The disordered stretch occupies residues 44–78; the sequence is MRQGTHKTKNRAEVSGGGRKPWRQKGTGRARQGSI.

The protein belongs to the universal ribosomal protein uL4 family. In terms of assembly, part of the 50S ribosomal subunit.

Functionally, one of the primary rRNA binding proteins, this protein initially binds near the 5'-end of the 23S rRNA. It is important during the early stages of 50S assembly. It makes multiple contacts with different domains of the 23S rRNA in the assembled 50S subunit and ribosome. In terms of biological role, this protein when expressed in E.coli represses the endogenous S10 operon; this may not occur in B.stearothermophilus however. Its function is as follows. Forms part of the polypeptide exit tunnel. The protein is Large ribosomal subunit protein uL4 (rplD) of Geobacillus stearothermophilus (Bacillus stearothermophilus).